Here is a 437-residue protein sequence, read N- to C-terminus: Eukaryotic peptide chain release factor subunit 1 (437 aa).

The short motif at 61-64 (NIKS) is the NIKS motif; plays an important role in translational termination element.

It belongs to the eukaryotic release factor 1 family. Component of the eRF1-eRF3-GTP ternary complex, composed of ETF1/ERF1 and eRF3 (GSPT1/ERF3A or GSPT2/ERF3B) and GTP.

It localises to the cytoplasm. Component of the eRF1-eRF3-GTP ternary complex, a ternary complex that mediates translation termination in response to the termination codons. The eRF1-eRF3-GTP complex binds to a stop codon in the ribosomal A-site. ETF1/ERF1 is responsible for stop codon recognition and inducing hydrolysis of peptidyl-tRNA. Following GTP hydrolysis, eRF3 (GSPT1/ERF3A or GSPT2/ERF3B) dissociates, permitting ETF1/eRF1 to accommodate fully in the A-site, followed by hydrolysis of peptidyl-tRNA. This chain is Eukaryotic peptide chain release factor subunit 1 (etf1), found in Xenopus tropicalis (Western clawed frog).